A 136-amino-acid chain; its full sequence is Sec-independent protein translocase protein TatB (136 aa).

The chain crosses the membrane as a helical span at residues Met1–Gly21. The segment at Tyr89–Ser136 is disordered. Positions Thr99–Pro115 are enriched in polar residues. Residues Ser122–Ser136 are compositionally biased toward basic and acidic residues.

Belongs to the TatB family. In terms of assembly, the Tat system comprises two distinct complexes: a TatABC complex, containing multiple copies of TatA, TatB and TatC subunits, and a separate TatA complex, containing only TatA subunits. Substrates initially bind to the TatABC complex, which probably triggers association of the separate TatA complex to form the active translocon.

The protein localises to the cell inner membrane. Part of the twin-arginine translocation (Tat) system that transports large folded proteins containing a characteristic twin-arginine motif in their signal peptide across membranes. Together with TatC, TatB is part of a receptor directly interacting with Tat signal peptides. TatB may form an oligomeric binding site that transiently accommodates folded Tat precursor proteins before their translocation. The sequence is that of Sec-independent protein translocase protein TatB from Hahella chejuensis (strain KCTC 2396).